The following is a 75-amino-acid chain: uncharacterized protein (75 aa).

This is an uncharacterized protein from Rickettsia conorii (strain ATCC VR-613 / Malish 7).